Here is a 229-residue protein sequence, read N- to C-terminus: Secreted RxLR effector protein PITG_22926 (229 aa).

The N-terminal stretch at 1–23 (MRCNHTLCVVAITFLVSWSQTLS) is a signal peptide. A RxLR-dEER motif is present at residues 34–45 (PLVRSVSATEER).

This sequence belongs to the RxLR effector family.

It localises to the secreted. It is found in the host nucleus. In terms of biological role, secreted effector that acts as a RNA silencing suppressor, probably by inhibiting the biogenesis of small RNAs in the host plant, to manipulate host immune responses and promote Phytophthora infection. The polypeptide is Secreted RxLR effector protein PITG_22926 (Phytophthora infestans (strain T30-4) (Potato late blight agent)).